A 1005-amino-acid polypeptide reads, in one-letter code: Helicase-like transcription factor (1005 aa).

Residue R27 is modified to Omega-N-methylarginine. A DNA-binding region spans residues 38–287 (EFQDIIPPDD…FSEKDQPENV (250 aa)). K112 is covalently cross-linked (Glycyl lysine isopeptide (Lys-Gly) (interchain with G-Cter in SUMO2)). Y195 is subject to Phosphotyrosine; by JAK2. K211 is covalently cross-linked (Glycyl lysine isopeptide (Lys-Gly) (interchain with G-Cter in SUMO2)). Position 294–301 (294–301 (DDMGLGKT)) interacts with ATP. The span at 325–361 (KNQVKKECNSSESDKPGRKDTIKKTDGLSKEGSRYSE) shows a compositional bias: basic and acidic residues. Positions 325–385 (KNQVKKECNS…SELSSSQPKR (61 aa)) are disordered. The segment covering 373–382 (YSMSELSSSQ) has biased composition (polar residues). S395, S396, and S398 each carry phosphoserine. The Helicase ATP-binding domain occupies 427–603 (GPSKIKEDTA…WSLLSFLKLK (177 aa)). Residues 554–557 (DEGH) carry the DEGH box motif. T733 carries the post-translational modification Phosphothreonine. The RING-type zinc finger occupies 757–798 (CAICLDSLTVPVITHCAHVFCKPCICQCIQNEQPHAKCPLCR). 2 required for interaction with the RFBP isoform of ATP11B regions span residues 767-772 (PVITHC) and 791-796 (HAKCPL). A Helicase C-terminal domain is found at 834 to 999 (ALMHALIDLR…EMKQAKINEI (166 aa)). An interaction with SP1 and SP3 region spans residues 922 to 1005 (SRVFLMDPAW…INEIRTLIDL (84 aa)).

The protein belongs to the SNF2/RAD54 helicase family. RAD16 subfamily. In terms of assembly, interacts with SP1 and SP3 independently of DNA; the interaction with these transcriptional factors may be required for basal transcription of target genes. Interacts (via the RING-finger) with isoform RFBP of ATP11B. Progesterone-dependent isoform 1 interacts with EGR1; the interaction requires prior binding to DNA and represses c-Rel via a DNA looping mechanism. Interacts with GATA4. Interacts with PCNA; the interaction promotes polyubiquitination of PCNA through association with the UBE2B-RAD18 and UBE2V2-UBE2N ubiquitin ligase complexes. Interacts with RAD18, SHPRH, UBE2V2 and UBE2N. In terms of processing, phosphorylated on serine, threonine, and tyrosine residues. Tyr-195 phosphorylation is catalyzed by JAK2 in response to prolactin treatment. It is required for DNA binding. In terms of tissue distribution, isoform 1 is expressed preferentially in bladder, cervix, diaphragm, duodenum, epididymis, heart, kidney, liver, lung, ovary (granulosa cells), prostate, spleen, testis (predominantly in the Sertoli cells of the seminiferous tubules) and vagina. Isoform 2 is expressed preferentially in lactating mammary gland and uterine endometrium.

The protein localises to the cytoplasm. The protein resides in the nucleus. It localises to the nucleolus. Its subcellular location is the nucleoplasm. The catalysed reaction is S-ubiquitinyl-[E2 ubiquitin-conjugating enzyme]-L-cysteine + [acceptor protein]-L-lysine = [E2 ubiquitin-conjugating enzyme]-L-cysteine + N(6)-ubiquitinyl-[acceptor protein]-L-lysine.. The protein operates within protein modification; protein ubiquitination. Functionally, has both helicase and E3 ubiquitin ligase activities. Possesses intrinsic ATP-dependent nucleosome-remodeling activity. This activity may be required for transcriptional activation or repression of specific target promoters. These may include the SERPINE1, to which this protein can bind directly. Mediates repression by c-Rel through a DNA-looping mechanism. Plays a role in error-free postreplication repair (PRR) of damaged DNA and maintains genomic stability through acting as a ubiquitin ligase for 'Lys-63'-linked polyubiquitination of chromatin-bound PCNA. Transcriptional regulator that mediates the ability of prolactin to augment progesterone-dependent transcription of the SCGB1A1/uteroglobin gene through a bipartite progesterone receptor half-site/overlapping Y-box combination (-38/-26) where progesterone activation is attenuated by nuclear factor Y binding. Regulation also involves two GC-rich sequences in the proximal promoter (positions -162/+90) and a RUSH/SMARCA3 site (positions -616/-611) in the 5'-untranslated region. The sequence is that of Helicase-like transcription factor (HLTF) from Oryctolagus cuniculus (Rabbit).